A 273-amino-acid chain; its full sequence is Protein N-terminal and lysine N-methyltransferase EFM7 (273 aa).

Residues 1–32 form a disordered region; it reads MSDIEDLASGGLFDEPKDFYKPEEQPGSDSYA. The span at 14-24 shows a compositional bias: basic and acidic residues; that stretch reads DEPKDFYKPEE. S-adenosyl-L-methionine-binding positions include tryptophan 65, 92–94, aspartate 114, tryptophan 161, and serine 183; that span reads GAG.

This sequence belongs to the class I-like SAM-binding methyltransferase superfamily. EFM7 family.

It is found in the cytoplasm. S-adenosyl-L-methionine-dependent protein methyltransferase that trimethylates the N-terminal glycine 'Gly-2' of elongation factor 1-alpha, before also catalyzing the mono- and dimethylation of 'Lys-3'. This is Protein N-terminal and lysine N-methyltransferase EFM7 from Yarrowia lipolytica (strain CLIB 122 / E 150) (Yeast).